We begin with the raw amino-acid sequence, 466 residues long: Cysteine--tRNA ligase (466 aa).

Cysteine 29 serves as a coordination point for Zn(2+). The short motif at 31–41 (ATVQAPPHIGH) is the 'HIGH' region element. Zn(2+) contacts are provided by cysteine 211, histidine 236, and glutamate 240. The 'KMSKS' region motif lies at 267-271 (KMSKS). Lysine 270 is an ATP binding site.

Belongs to the class-I aminoacyl-tRNA synthetase family. As to quaternary structure, monomer. Zn(2+) is required as a cofactor.

The protein resides in the cytoplasm. It catalyses the reaction tRNA(Cys) + L-cysteine + ATP = L-cysteinyl-tRNA(Cys) + AMP + diphosphate. This chain is Cysteine--tRNA ligase, found in Thermobifida fusca (strain YX).